Reading from the N-terminus, the 267-residue chain is N-acetylgalactosamine permease IIC component 1 (267 aa).

Topologically, residues 1 to 10 (MHEITLLQGL) are periplasmic. In terms of domain architecture, PTS EIIC type-4 spans 1 to 237 (MHEITLLQGL…VAVLGAGFAV (237 aa)). A helical transmembrane segment spans residues 11–31 (SLAALVFVLGIDFWLEALFLF). Topologically, residues 32–33 (RP) are cytoplasmic. Residues 34-54 (IIVCTLTGAILGDIQTGLITG) traverse the membrane as a helical segment. Residues 55–66 (GLTELAFAGLTP) are Periplasmic-facing. The helical transmembrane segment at 67–87 (AGGVQPPNPIMAGLMTTVIAW) threads the bilayer. Residues 88-94 (STGVDAK) are Cytoplasmic-facing. A helical membrane pass occupies residues 95-115 (TAIGLGLPFSLLMQYVILFFY). Topologically, residues 116-141 (SAFSLFMTKADKCAKEADTAAFSRLN) are periplasmic. A helical transmembrane segment spans residues 142 to 162 (WTTMLIVASAYAVIAFLCTYL). The Cytoplasmic portion of the chain corresponds to 163–177 (AQGAMQALVKAMPAW). A helical membrane pass occupies residues 178 to 198 (LTHGFEVAGGILPAVGFGLLL). Residues 199-209 (RVMFKAQYIPY) lie on the Periplasmic side of the membrane. A helical membrane pass occupies residues 210–230 (LIAGFLFVCYIQVSNLLPVAV). At 231-267 (LGAGFAVYEFFNAKSRQQAQPQPVASKNEEEDYSNGI) the chain is on the cytoplasmic side.

The protein localises to the cell inner membrane. Functionally, the phosphoenolpyruvate-dependent sugar phosphotransferase system (PTS), a major carbohydrate active -transport system, catalyzes the phosphorylation of incoming sugar substrates concomitant with their translocation across the cell membrane. This system is involved in N-acetylgalactosamine transport. In Escherichia coli (strain K12), this protein is N-acetylgalactosamine permease IIC component 1 (agaC).